The following is a 227-amino-acid chain: Aspartyl protease inhibitor (227 aa).

An N-terminal signal peptide occupies residues 1–15; the sequence is MKLVVLCVLCGIALA. A compositionally biased stretch (basic and acidic residues) spans 88 to 109; sequence SLKSRMAGKKEKAVTPKEEDLP. The interval 88 to 116 is disordered; sequence SLKSRMAGKKEKAVTPKEEDLPKAPQKPS. The cysteines at positions 131 and 223 are disulfide-linked.

Belongs to the protease inhibitor I33 family.

It localises to the secreted. In terms of biological role, aspartyl protease inhibitor. This chain is Aspartyl protease inhibitor (API), found in Ostertagia ostertagi (Brown stomach worm).